The primary structure comprises 371 residues: 2-aminoethylphosphonate--pyruvate transaminase (371 aa).

Lys198 carries the post-translational modification N6-(pyridoxal phosphate)lysine.

Belongs to the class-V pyridoxal-phosphate-dependent aminotransferase family. PhnW subfamily. As to quaternary structure, homodimer. The cofactor is pyridoxal 5'-phosphate.

The enzyme catalyses (2-aminoethyl)phosphonate + pyruvate = phosphonoacetaldehyde + L-alanine. In terms of biological role, involved in phosphonate degradation. The protein is 2-aminoethylphosphonate--pyruvate transaminase of Syntrophobacter fumaroxidans (strain DSM 10017 / MPOB).